A 932-amino-acid polypeptide reads, in one-letter code: Valine--tRNA ligase (932 aa).

The 'HIGH' region signature appears at 75–85; it reads PNVTGQLHMGH. The 'KMSKS' region motif lies at 568–572; sequence KMSKS. ATP is bound at residue lysine 571. Residues 863–929 are a coiled coil; that stretch reads TVDVAAERKR…ERITARLEGL (67 aa).

The protein belongs to the class-I aminoacyl-tRNA synthetase family. ValS type 1 subfamily. In terms of assembly, monomer.

The protein resides in the cytoplasm. It catalyses the reaction tRNA(Val) + L-valine + ATP = L-valyl-tRNA(Val) + AMP + diphosphate. Catalyzes the attachment of valine to tRNA(Val). As ValRS can inadvertently accommodate and process structurally similar amino acids such as threonine, to avoid such errors, it has a 'posttransfer' editing activity that hydrolyzes mischarged Thr-tRNA(Val) in a tRNA-dependent manner. The chain is Valine--tRNA ligase from Corynebacterium jeikeium (strain K411).